The following is a 331-amino-acid chain: Olfactory receptor 7E178 (331 aa).

The Extracellular portion of the chain corresponds to 1–47; it reads MMDRYSFIMHQHRDDTVWCPSKIEEQNITRISEFHLMGLSDDLQLQP. A glycan (N-linked (GlcNAc...) asparagine) is linked at N27. Residues 48 to 68 form a helical membrane-spanning segment; it reads ILFGLFLSMYLVTLLGNLLII. The Cytoplasmic portion of the chain corresponds to 69–80; the sequence is LTVSSDSHLHSP. Residues 81–100 form a helical membrane-spanning segment; the sequence is MYFFLSNLSLADVSFTSTTL. Over 101–119 the chain is Extracellular; it reads PKMIVDIQTHNRAISYSGC. The cysteines at positions 119 and 201 are disulfide-linked. The helical transmembrane segment at 120 to 140 threads the bilayer; sequence LTQMSFFMLFGCLDSLLLTAM. At 141-164 the chain is on the cytoplasmic side; that stretch reads AYDRFVAICHPLHYQFIMNPRLCG. The chain crosses the membrane as a helical span at residues 165 to 185; sequence LLVFLSVLISLFVSQLHNSVV. Over 186 to 218 the chain is Extracellular; the sequence is LQLTYFKSVDISHFFCDPSQLLNLACSDTFTNN. Residues 219–239 form a helical membrane-spanning segment; that stretch reads IVMYFVGAISGFLPISGIFFS. At 240–266 the chain is on the cytoplasmic side; sequence YYKIVSSILRMPSPGGKYKAFSTCGSH. The chain crosses the membrane as a helical span at residues 267-287; sequence LSVVCLFYGTGLGVYLSSAVS. The Extracellular portion of the chain corresponds to 288–293; it reads LSPRKG. A helical transmembrane segment spans residues 294–314; sequence AVASIVYTVVTPMLNPFIYSL. Over 315 to 331 the chain is Cytoplasmic; it reads RNQDIKRAMWRLLRKTV.

Belongs to the G-protein coupled receptor 1 family.

It localises to the cell membrane. Odorant receptor. This chain is Olfactory receptor 7E178, found in Mus musculus (Mouse).